We begin with the raw amino-acid sequence, 88 residues long: DNA-directed RNA polymerase subunit omega (88 aa).

Belongs to the RNA polymerase subunit omega family. The RNAP catalytic core consists of 2 alpha, 1 beta, 1 beta' and 1 omega subunit. When a sigma factor is associated with the core the holoenzyme is formed, which can initiate transcription.

The enzyme catalyses RNA(n) + a ribonucleoside 5'-triphosphate = RNA(n+1) + diphosphate. Its function is as follows. Promotes RNA polymerase assembly. Latches the N- and C-terminal regions of the beta' subunit thereby facilitating its interaction with the beta and alpha subunits. The polypeptide is DNA-directed RNA polymerase subunit omega (Anaeromyxobacter sp. (strain Fw109-5)).